A 446-amino-acid polypeptide reads, in one-letter code: Phosphoglucosamine mutase (446 aa).

The active-site Phosphoserine intermediate is the S99. Mg(2+) contacts are provided by S99, D242, D244, and D246. The residue at position 99 (S99) is a Phosphoserine.

This sequence belongs to the phosphohexose mutase family. Mg(2+) is required as a cofactor. Post-translationally, activated by phosphorylation.

It catalyses the reaction alpha-D-glucosamine 1-phosphate = D-glucosamine 6-phosphate. Its function is as follows. Catalyzes the conversion of glucosamine-6-phosphate to glucosamine-1-phosphate. This Wolinella succinogenes (strain ATCC 29543 / DSM 1740 / CCUG 13145 / JCM 31913 / LMG 7466 / NCTC 11488 / FDC 602W) (Vibrio succinogenes) protein is Phosphoglucosamine mutase.